A 214-amino-acid polypeptide reads, in one-letter code: STS14 protein (214 aa).

Positions M1–Y19 are cleaved as a signal peptide. Tandem repeats lie at residues Y13–I14, Y15–I16, and Y17–I18. A 3 X 2 AA tandem repeats of Y-I region spans residues Y13–I18. Residues L80–C200 form the SCP domain.

It belongs to the CRISP family. In terms of tissue distribution, highly expressed in the stigma and stylar cortex throughout pistil development. Not expressed in other organs.

In terms of biological role, may protect the outer tissues of the pistil from pathogen attack. This Solanum tuberosum (Potato) protein is STS14 protein (STS14).